We begin with the raw amino-acid sequence, 316 residues long: DNA-directed RNA polymerase III subunit RPC6 (316 aa).

Ala-2 carries the N-acetylalanine modification. Residues Lys-5 and Lys-7 each participate in a glycyl lysine isopeptide (Lys-Gly) (interchain with G-Cter in SUMO2) cross-link. [4Fe-4S] cluster contacts are provided by Cys-287, Cys-290, Cys-296, and Cys-307.

It belongs to the eukaryotic RPC34/RPC39 RNA polymerase subunit family. As to quaternary structure, component of the RNA polymerase III complex consisting of 17 subunits: a ten-subunit horseshoe-shaped catalytic core composed of POLR3A/RPC1, POLR3B/RPC2, POLR1C/RPAC1, POLR1D/RPAC2, POLR3K/RPC10, POLR2E/RPABC1, POLR2F/RPABC2, POLR2H/RPABC3, POLR2K/RPABC4 and POLR2L/RPABC5; a mobile stalk composed of two subunits POLR3H/RPC8 and CRCP/RPC9, protruding from the core and functioning primarily in transcription initiation; and additional subunits homologous to general transcription factors of the RNA polymerase II machinery, POLR3C/RPC3-POLR3F/RPC6-POLR3G/RPC7 heterotrimer required for transcription initiation and POLR3D/RPC4-POLR3E/RPC5 heterodimer involved in both transcription initiation and termination. Directly interacts with POLR3C. Interacts with TBP and TFIIIB90 and GTF3C4. Interacts with MAF1. As part of the RNA polymerase III complex, interacts with PKP2.

The protein localises to the nucleus. Functionally, DNA-dependent RNA polymerase catalyzes the transcription of DNA into RNA using the four ribonucleoside triphosphates as substrates. Specific peripheric component of RNA polymerase III (Pol III) which synthesizes small non-coding RNAs including 5S rRNA, snRNAs, tRNAs and miRNAs from at least 500 distinct genomic loci. Part of POLR3C/RPC3-POLR3F/RPC6-POLR3G/RPC7 heterotrimer that coordinates the dynamics of Pol III stalk and clamp modules during the transition from apo to elongation state. Pol III plays a key role in sensing and limiting infection by intracellular bacteria and DNA viruses, including varicella zoster virus. Acts as a nuclear and cytosolic DNA sensor detecting AT-rich DNA, involved in innate immune response. Can sense non-self dsDNA that serves as template for transcription into dsRNA. The non-self RNA polymerase III transcripts, such as Epstein-Barr virus-encoded RNAs (EBERs) induce type I interferon and NF-kappa-B through the RIG-I pathway. Preferentially binds double-stranded DNA (dsDNA). This is DNA-directed RNA polymerase III subunit RPC6 from Mus musculus (Mouse).